Reading from the N-terminus, the 452-residue chain is Friend leukemia integration 1 transcription factor (452 aa).

Residue S39 is modified to Phosphoserine. The 87-residue stretch at 112–198 (PPPPNMTTNE…SHLSYLRESS (87 aa)) folds into the PNT domain. The tract at residues 209–271 (DQSSRLSVKE…PYQILGPTSS (63 aa)) is disordered. A compositionally biased stretch (basic and acidic residues) spans 215 to 226 (SVKEDPSYDSVR). The span at 248–257 (QTISKNTEQR) shows a compositional bias: polar residues. The ETS DNA-binding region spans 281–361 (IQLWQFLLEL…HGKRYAYKFD (81 aa)). The tract at residues 433-452 (NPNVPRHPNTHVPSHLGSYY) is disordered.

It belongs to the ETS family. Can form homodimers or heterodimers with ETV6/TEL1.

Its subcellular location is the nucleus. Sequence-specific transcriptional activator. Recognizes the DNA sequence 5'-C[CA]GGAAGT-3'. This Homo sapiens (Human) protein is Friend leukemia integration 1 transcription factor (FLI1).